A 424-amino-acid chain; its full sequence is O-methyltransferase bfoD (424 aa).

Asp275 provides a ligand contact to S-adenosyl-L-methionine. His326 (proton acceptor) is an active-site residue.

It belongs to the class I-like SAM-binding methyltransferase superfamily. Cation-independent O-methyltransferase family.

Its pathway is secondary metabolite biosynthesis. In terms of biological role, cytochrome P450 monooxygenase; part of the gene cluster that mediates the biosynthesis of bifonsecin B, a dimeric gamma-naphthopyrone. The first step in the biosynthesis of bifonsecin B is the production of gamma-naphthopyrone precursor YWA1 by the non-reducing polyketide synthase albA, via condensation of one acetyl-CoA starter unit with 6 malonyl-CoA units. YWA1 is then methylated by bfoE at position C-6 to yield foncesin which is further methylated at position C-8 by bfoD to produce fonsecin B. A key enzyme in the biosynthetic pathway is the cytochrome P450 monooxygenase bfoB which catalyzes the oxidative dimerization of fonsecin B to bifonsecin B. Bfob also catalyzes the oxidative dimerization of rubrofusarin B into nigerone. The stereoselectivity of bfoB is influenced by the two natural monomeric substrates; homodimerization of fonsecin B yields a stereochemically pure biaryl, M-foncerine B, while rubrofusarin B yields a mixture of enantiomers M- and P-nigerone. The polypeptide is O-methyltransferase bfoD (Aspergillus brasiliensis (strain CBS 101740 / IMI 381727 / IBT 21946)).